Here is a 373-residue protein sequence, read N- to C-terminus: Transcription factor bHLH87 (373 aa).

The disordered stretch occupies residues 127–227; it reads SAESENREIT…GGSSNISFQH (101 aa). Positions 188-218 are enriched in basic and acidic residues; sequence PQDDSEKGGFKLIYDENQSKSKKPRTEKERG. One can recognise a bHLH domain in the interval 275-324; the sequence is ISTDPQTVAARQRRERISEKIRVLQTLVPGGTKMDTASMLDEAANYLKFL.

Homodimer. In terms of tissue distribution, flowers.

It is found in the nucleus. This Arabidopsis thaliana (Mouse-ear cress) protein is Transcription factor bHLH87 (BHLH87).